A 231-amino-acid chain; its full sequence is Elongation factor 1-delta 1 (231 aa).

At Ala2 the chain carries N-acetylalanine. In terms of domain architecture, GST C-terminal spans 10-73 (DAGLKKLDEH…LRISGVSAEG (64 aa)). 2 disordered regions span residues 85–108 (TEEA…EDDD) and 116–135 (ETEE…KAST). Positions 119–129 (EEKKAAEERAA) are enriched in basic and acidic residues.

This sequence belongs to the EF-1-beta/EF-1-delta family. As to quaternary structure, EF-1 is composed of 4 subunits: alpha, beta (1B-alpha=beta'), delta (1B-beta), and gamma (1B-gamma).

Functionally, EF-1-beta and EF-1-delta stimulate the exchange of GDP bound to EF-1-alpha to GTP. The chain is Elongation factor 1-delta 1 from Arabidopsis thaliana (Mouse-ear cress).